A 905-amino-acid polypeptide reads, in one-letter code: Probable cation-transporting ATPase F (905 aa).

Transmembrane regions (helical) follow at residues 84 to 104 (EFVD…VGFI), 248 to 268 (FSKF…GVGL), and 283 to 303 (ALAV…TLAI). The 4-aspartylphosphate intermediate role is filled by D333. Mg(2+)-binding residues include D643 and D647. Helical transmembrane passes span 716-736 (ILAA…ILWI), 738-758 (MTTA…AGIM), 778-798 (TLLV…WELD), 808-828 (TAAL…CRSL), 842-862 (WIIL…YLPA), and 872-892 (IDIG…IVVA).

It belongs to the cation transport ATPase (P-type) (TC 3.A.3) family. Type IIA subfamily.

It localises to the cell membrane. The enzyme catalyses ATP + H2O = ADP + phosphate + H(+). The protein is Probable cation-transporting ATPase F (ctpF) of Mycobacterium bovis (strain ATCC BAA-935 / AF2122/97).